Consider the following 446-residue polypeptide: Alkylglycerol monooxygenase (446 aa).

2 consecutive transmembrane segments (helical) span residues 39–59 (VNQATPYFIGLILLEIVLGWL) and 103–123 (FHFLELPWDSAWTWWLAFLGV). Positions 117–248 (WLAFLGVDMG…LIIWDRMFGT (132 aa)) constitute a Fatty acid hydroxylase domain. Positions 131 to 135 (HRFAH) match the Histidine box-1 motif. The short motif at 144–148 (HQVHH) is the Histidine box-2 element. Residues 167-187 (FSSWIFYSPLALLIPPSVFAV) form a helical membrane-spanning segment. The short motif at 220 to 224 (HRVHH) is the Histidine box-3 element. 3 helical membrane-spanning segments follow: residues 329–349 (AWSPVMQAYVILQFFLLLDVY), 362–382 (LTVILLTAYVLLSLTSLGFLI), and 410–430 (PLLPALAFPMEAFILISTIYW).

Belongs to the sterol desaturase family. TMEM195 subfamily. It depends on Fe cation as a cofactor.

It is found in the endoplasmic reticulum membrane. It catalyses the reaction 1-O-(1,2-saturated-alkyl)-sn-glycerol + (6R)-L-erythro-5,6,7,8-tetrahydrobiopterin + O2 = a 1-(1-hydroxyalkyl)-sn-glycerol + (6R)-L-erythro-6,7-dihydrobiopterin + H2O. Glyceryl-ether monooxygenase that cleaves the O-alkyl bond of ether lipids. Ether lipids are essential components of brain membranes. The polypeptide is Alkylglycerol monooxygenase (agmo) (Danio rerio (Zebrafish)).